The following is a 220-amino-acid chain: Small ribosomal subunit protein eS1 (220 aa).

This sequence belongs to the eukaryotic ribosomal protein eS1 family.

This chain is Small ribosomal subunit protein eS1, found in Pyrobaculum arsenaticum (strain DSM 13514 / JCM 11321 / PZ6).